The primary structure comprises 246 residues: DNA repair protein RecO (246 aa).

Belongs to the RecO family.

Functionally, involved in DNA repair and RecF pathway recombination. This Alkaliphilus metalliredigens (strain QYMF) protein is DNA repair protein RecO.